A 692-amino-acid polypeptide reads, in one-letter code: Elongation factor G (692 aa).

The tr-type G domain occupies 8-283; that stretch reads NRIRNIGIAA…AVIDYLPAPT (276 aa). GTP-binding positions include 17–24, 81–85, and 135–138; these read AHIDAGKT, DTPGH, and NKMD.

This sequence belongs to the TRAFAC class translation factor GTPase superfamily. Classic translation factor GTPase family. EF-G/EF-2 subfamily.

The protein localises to the cytoplasm. Catalyzes the GTP-dependent ribosomal translocation step during translation elongation. During this step, the ribosome changes from the pre-translocational (PRE) to the post-translocational (POST) state as the newly formed A-site-bound peptidyl-tRNA and P-site-bound deacylated tRNA move to the P and E sites, respectively. Catalyzes the coordinated movement of the two tRNA molecules, the mRNA and conformational changes in the ribosome. The protein is Elongation factor G of Helicobacter pylori (strain G27).